A 245-amino-acid polypeptide reads, in one-letter code: Galectin-3 (245 aa).

A disordered region spans residues Met1–Pro30. Ala2 bears the N-acetylalanine mark. Ser6 is modified (phosphoserine; by CK1). 4 repeat units span residues Tyr35 to Ala43, Tyr44 to Ala52, Tyr53 to Ala61, and Tyr62 to Ala70. Residues Tyr35–Ala99 form a 7 X 9 AA tandem repeats of Y-P-G-X(3)-P-[GS]-A region. Residues Gln47–Pro68 are disordered. Residues Tyr71 to Ala78 form a 5; approximate repeat. A 6; approximate repeat occupies Tyr79–Ala88. The stretch at Tyr89–Ala99 is one 7; approximate repeat. Positions Tyr113 to Thr243 constitute a Galectin domain. An a beta-D-galactoside-binding site is contributed by Trp176–Gln182. Phosphoserine is present on Ser183. The Nuclear export signal signature appears at Lys221–Thr236.

In terms of assembly, probably forms homo- or heterodimers. Interacts with DMBT1. Interacts with CD6 and ALCAM. Forms a complex with the ITGA3, ITGB1 and CSPG4. Interacts with LGALS3BP, LYPD3, ZFTRAF1 and UACA. Interacts with TRIM16; this interaction mediates autophagy of damage endomembranes. Interacts with cargo receptor TMED10; the interaction mediates the translocation from the cytoplasm into the ERGIC (endoplasmic reticulum-Golgi intermediate compartment) and thereby secretion. Interacts with and inhibits by binding NCR3/NKp30.

It is found in the cytoplasm. The protein localises to the nucleus. Its subcellular location is the secreted. Galactose-specific lectin which binds IgE. May mediate with the alpha-3, beta-1 integrin the stimulation by CSPG4 of endothelial cells migration. Together with DMBT1, required for terminal differentiation of columnar epithelial cells during early embryogenesis. In the nucleus: acts as a pre-mRNA splicing factor. Involved in acute inflammatory responses including neutrophil activation and adhesion, chemoattraction of monocytes macrophages, opsonization of apoptotic neutrophils, and activation of mast cells. Together with TRIM16, coordinates the recognition of membrane damage with mobilization of the core autophagy regulators ATG16L1 and BECN1 in response to damaged endomembranes. When secreted, interacts with NK cell-activating receptor NCR3/NKp30 acting as an inhibitory ligand which antagonizes NK cell attack. This is Galectin-3 (LGALS3) from Cricetulus longicaudatus (Long-tailed dwarf hamster).